We begin with the raw amino-acid sequence, 279 residues long: Large ribosomal subunit protein uL2 (279 aa).

Disordered regions lie at residues 29 to 53 and 224 to 279; these read PEKS…TTRH and VAMN…KKRK. Residues 253–268 show a composition bias toward basic and acidic residues; sequence KEGRTRHPNKESDKLI. Basic residues predominate over residues 269–279; that stretch reads VRRRNAGKKRK.

The protein belongs to the universal ribosomal protein uL2 family. Part of the 50S ribosomal subunit. Forms a bridge to the 30S subunit in the 70S ribosome.

In terms of biological role, one of the primary rRNA binding proteins. Required for association of the 30S and 50S subunits to form the 70S ribosome, for tRNA binding and peptide bond formation. It has been suggested to have peptidyltransferase activity; this is somewhat controversial. Makes several contacts with the 16S rRNA in the 70S ribosome. The protein is Large ribosomal subunit protein uL2 of Leifsonia xyli subsp. xyli (strain CTCB07).